The following is a 226-amino-acid chain: DNA mismatch repair protein MutH (226 aa).

Belongs to the MutH family.

It is found in the cytoplasm. Its function is as follows. Sequence-specific endonuclease that cleaves unmethylated GATC sequences. It is involved in DNA mismatch repair. The sequence is that of DNA mismatch repair protein MutH from Vibrio parahaemolyticus serotype O3:K6 (strain RIMD 2210633).